The following is a 57-amino-acid chain: Small hydrophobic protein (57 aa).

Residues 1–8 (MPAIQPPL) are Virion surface-facing. The helical transmembrane segment at 9 to 29 (YLTFLLLTLLYLIITLYVWTI) threads the bilayer. At 30-57 (LTINHNTAVRYAALYQRSFSRWGFDQSL) the chain is on the intravirion side.

It belongs to the rubulavirus small hydrophobic protein family. Interacts with host TNFRSF1A, RIPK1 and IRAK1; these interactions interfere with host NF-kappa-B activation at the level of receptor complexes. Interacts with host protein UBQLN4.

The protein resides in the virion membrane. The protein localises to the host cell membrane. Plays a role in the inhibition of the host NF-kappa-B pathway. This inhibition occurs at the receptor level, by preventing the signaling of TNFR1 as well as IL-1R and TLR3. The chain is Small hydrophobic protein (SH) from Mumps virus genotype A (strain Jeryl-Lynn) (MuV).